Consider the following 885-residue polypeptide: Alanine--tRNA ligase (885 aa).

Zn(2+) contacts are provided by His564, His568, Cys676, and His680.

It belongs to the class-II aminoacyl-tRNA synthetase family. Zn(2+) is required as a cofactor.

It is found in the cytoplasm. It catalyses the reaction tRNA(Ala) + L-alanine + ATP = L-alanyl-tRNA(Ala) + AMP + diphosphate. Functionally, catalyzes the attachment of alanine to tRNA(Ala) in a two-step reaction: alanine is first activated by ATP to form Ala-AMP and then transferred to the acceptor end of tRNA(Ala). Also edits incorrectly charged Ser-tRNA(Ala) and Gly-tRNA(Ala) via its editing domain. In Brucella ovis (strain ATCC 25840 / 63/290 / NCTC 10512), this protein is Alanine--tRNA ligase.